Reading from the N-terminus, the 206-residue chain is Orotate phosphoribosyltransferase (206 aa).

Residues K26, 72–73, R99, K100, K103, H105, and 124–132 each bind 5-phospho-alpha-D-ribose 1-diphosphate; these read YK and DDVMTSGFS. Orotate is bound by residues T128 and R157.

This sequence belongs to the purine/pyrimidine phosphoribosyltransferase family. PyrE subfamily. In terms of assembly, homodimer. Mg(2+) is required as a cofactor.

The enzyme catalyses orotidine 5'-phosphate + diphosphate = orotate + 5-phospho-alpha-D-ribose 1-diphosphate. The protein operates within pyrimidine metabolism; UMP biosynthesis via de novo pathway; UMP from orotate: step 1/2. Functionally, catalyzes the transfer of a ribosyl phosphate group from 5-phosphoribose 1-diphosphate to orotate, leading to the formation of orotidine monophosphate (OMP). The protein is Orotate phosphoribosyltransferase of Buchnera aphidicola subsp. Baizongia pistaciae (strain Bp).